The chain runs to 348 residues: MADIYRFPKFSYEDNGTVEPLPLRTGPDKKAIPYIRIIKVGDPPKHGVRYLDLLLLGFFETPKQTTNLGSVSDLTEPTSYSICGSGSLPIGVAKYYGTDQELLKACTDLRITVRRTVRAGEMIVYMVDSIGAPLLPWSGRLRQGMIFNANKVALAPQCLPVDKDIRFRVVFVNGTSLGAITIAKIPKTLADLALPNSISVNLLVTLKTGISTEQKGVLPVLDDQGEKKLNFMVHLGLIRRKVGKIYSVEYCKSKIERMRLIFSLGLIGGISFHVQVTGTLSKTFMSQLAWKRAVCFPLMDVNPHMNLVIWAASVEITGVDAVFQPAIPRDFRYYPNVVAKNIGRIRKL.

The YLDL motif motif lies at 50-53 (YLDL). S70 is subject to Phosphoserine; by host.

The protein belongs to the morbillivirus/respirovirus/rubulavirus M protein family. As to quaternary structure, homomultimer. Binds to the cytoplasmic regions of F and HN proteins. Interacts with nucleocapsid. Interacts with human alpha-tubulin and beta-tubulin. Interacts with host ANP32B. Post-translationally, a large portion is phosphorylated in the cytoplasm, but not in virion. However, this phosphorylation is not essential for virus replication.

Its subcellular location is the virion. The protein resides in the host cytoplasm. It is found in the host cell membrane. Plays a crucial role in virion assembly and budding. Forms a shell at the inner face of the plasma membrane and concentrates the HN and F glycoproteins. Acts as a negative regulator for transcription and replication by sticking to the nucleocapsid. This effect might be regulated by the cytoplasmic interaction with tubulin that dissociates the M protein from the nucleocapsid. The chain is Matrix protein (M) from Sendai virus (strain Fushimi) (SeV).